A 369-amino-acid polypeptide reads, in one-letter code: D-glucosaminate-6-phosphate ammonia lyase (369 aa).

N6-(pyridoxal phosphate)lysine is present on K213.

Belongs to the SelA family. It depends on pyridoxal 5'-phosphate as a cofactor.

It catalyses the reaction 2-amino-2-deoxy-D-gluconate 6-phosphate = 2-dehydro-3-deoxy-6-phospho-D-gluconate + NH4(+). Involved in the catabolism of D-glucosaminate. Catalyzes the conversion of D-glucosaminate 6-phosphate to yield keto-3-deoxygluconate 6-phosphate (KDGP). This is D-glucosaminate-6-phosphate ammonia lyase from Salmonella typhimurium (strain 14028s / SGSC 2262).